Consider the following 382-residue polypeptide: Queuine tRNA-ribosyltransferase (382 aa).

The Proton acceptor role is filled by Asp-96. Substrate is bound by residues 96–100 (DSGGF), Asp-151, Gln-194, and Gly-221. An RNA binding region spans residues 252–258 (GVGAPDS). Asp-271 acts as the Nucleophile in catalysis. The tract at residues 276 to 280 (TRIAR) is RNA binding; important for wobble base 34 recognition. 4 residues coordinate Zn(2+): Cys-309, Cys-311, Cys-314, and His-340.

This sequence belongs to the queuine tRNA-ribosyltransferase family. As to quaternary structure, homodimer. Within each dimer, one monomer is responsible for RNA recognition and catalysis, while the other monomer binds to the replacement base PreQ1. Requires Zn(2+) as cofactor.

It catalyses the reaction 7-aminomethyl-7-carbaguanine + guanosine(34) in tRNA = 7-aminomethyl-7-carbaguanosine(34) in tRNA + guanine. The protein operates within tRNA modification; tRNA-queuosine biosynthesis. In terms of biological role, catalyzes the base-exchange of a guanine (G) residue with the queuine precursor 7-aminomethyl-7-deazaguanine (PreQ1) at position 34 (anticodon wobble position) in tRNAs with GU(N) anticodons (tRNA-Asp, -Asn, -His and -Tyr). Catalysis occurs through a double-displacement mechanism. The nucleophile active site attacks the C1' of nucleotide 34 to detach the guanine base from the RNA, forming a covalent enzyme-RNA intermediate. The proton acceptor active site deprotonates the incoming PreQ1, allowing a nucleophilic attack on the C1' of the ribose to form the product. After dissociation, two additional enzymatic reactions on the tRNA convert PreQ1 to queuine (Q), resulting in the hypermodified nucleoside queuosine (7-(((4,5-cis-dihydroxy-2-cyclopenten-1-yl)amino)methyl)-7-deazaguanosine). The protein is Queuine tRNA-ribosyltransferase of Lactococcus lactis subsp. cremoris (strain MG1363).